The sequence spans 145 residues: D-aminoacyl-tRNA deacylase (145 aa).

The short motif at 137–138 is the Gly-cisPro motif, important for rejection of L-amino acids element; sequence GP.

Belongs to the DTD family. Homodimer.

Its subcellular location is the cytoplasm. It carries out the reaction glycyl-tRNA(Ala) + H2O = tRNA(Ala) + glycine + H(+). It catalyses the reaction a D-aminoacyl-tRNA + H2O = a tRNA + a D-alpha-amino acid + H(+). Functionally, an aminoacyl-tRNA editing enzyme that deacylates mischarged D-aminoacyl-tRNAs. Also deacylates mischarged glycyl-tRNA(Ala), protecting cells against glycine mischarging by AlaRS. Acts via tRNA-based rather than protein-based catalysis; rejects L-amino acids rather than detecting D-amino acids in the active site. By recycling D-aminoacyl-tRNA to D-amino acids and free tRNA molecules, this enzyme counteracts the toxicity associated with the formation of D-aminoacyl-tRNA entities in vivo and helps enforce protein L-homochirality. The sequence is that of D-aminoacyl-tRNA deacylase from Francisella tularensis subsp. novicida (strain U112).